The chain runs to 373 residues: Flap endonuclease 1 (373 aa).

The N-domain stretch occupies residues 1–105; it reads MGIKGLNALI…GELEKRLKRR (105 aa). Aspartate 34 provides a ligand contact to Mg(2+). DNA-binding residues include arginine 47 and arginine 71. Mg(2+)-binding residues include aspartate 87, glutamate 159, glutamate 161, aspartate 180, and aspartate 182. The I-domain stretch occupies residues 123 to 254; it reads DIAKFERRTV…VTAFKLIKEH (132 aa). A DNA-binding site is contributed by glutamate 159. DNA-binding residues include glycine 232 and aspartate 234. Aspartate 234 lines the Mg(2+) pocket. The segment at 340–348 is interaction with PCNA; the sequence is TQGRLDKFF. Residues 347–373 form a disordered region; the sequence is FFVVKKRPAEEKKGKNTKEEKPKKKRK.

This sequence belongs to the XPG/RAD2 endonuclease family. FEN1 subfamily. Interacts with PCNA. Three molecules of FEN1 bind to one PCNA trimer with each molecule binding to one PCNA monomer. PCNA stimulates the nuclease activity without altering cleavage specificity. The cofactor is Mg(2+). Post-translationally, phosphorylated. Phosphorylation upon DNA damage induces relocalization to the nuclear plasma.

It is found in the nucleus. It localises to the nucleolus. The protein resides in the nucleoplasm. The protein localises to the mitochondrion. In terms of biological role, structure-specific nuclease with 5'-flap endonuclease and 5'-3' exonuclease activities involved in DNA replication and repair. During DNA replication, cleaves the 5'-overhanging flap structure that is generated by displacement synthesis when DNA polymerase encounters the 5'-end of a downstream Okazaki fragment. It enters the flap from the 5'-end and then tracks to cleave the flap base, leaving a nick for ligation. Also involved in the long patch base excision repair (LP-BER) pathway, by cleaving within the apurinic/apyrimidinic (AP) site-terminated flap. Acts as a genome stabilization factor that prevents flaps from equilibrating into structures that lead to duplications and deletions. Also possesses 5'-3' exonuclease activity on nicked or gapped double-stranded DNA, and exhibits RNase H activity. Also involved in replication and repair of rDNA and in repairing mitochondrial DNA. The sequence is that of Flap endonuclease 1 from Komagataella phaffii (strain GS115 / ATCC 20864) (Yeast).